The chain runs to 570 residues: Rho GTPase-activating protein gacEE (570 aa).

The 107-residue stretch at 127–233 (NSDISGVLLK…WVTTINNCID (107 aa)) folds into the PH domain. One can recognise a C2 domain in the interval 224–343 (WVTTINNCID…PNGSEISLWL (120 aa)). Residues Asp-260, Asp-266, Asp-312, Asp-314, and Asp-320 each contribute to the Ca(2+) site. One can recognise a Rho-GAP domain in the interval 381–567 (NSLEAIVKNR…FVFENSQQIL (187 aa)).

The cofactor is Ca(2+).

Its subcellular location is the cytoplasm. In terms of biological role, rho GTPase-activating protein involved in the signal transduction pathway. The chain is Rho GTPase-activating protein gacEE (gacEE) from Dictyostelium discoideum (Social amoeba).